The primary structure comprises 454 residues: Ribosomal protein uS12 methylthiotransferase RimO (454 aa).

Residues 14-125 (SKIAFSHVGC…IAKVLDRVEK (112 aa)) form the MTTase N-terminal domain. The [4Fe-4S] cluster site is built by Cys-23, Cys-59, Cys-88, Cys-163, Cys-167, and Cys-170. A Radical SAM core domain is found at 149–378 (DKNKFVAYLR…ISVQQNISRE (230 aa)). In terms of domain architecture, TRAM spans 381 to 452 (QIYVGSKMKI…EYDLYGETIK (72 aa)).

The protein belongs to the methylthiotransferase family. RimO subfamily. [4Fe-4S] cluster is required as a cofactor.

It localises to the cytoplasm. The enzyme catalyses L-aspartate(89)-[ribosomal protein uS12]-hydrogen + (sulfur carrier)-SH + AH2 + 2 S-adenosyl-L-methionine = 3-methylsulfanyl-L-aspartate(89)-[ribosomal protein uS12]-hydrogen + (sulfur carrier)-H + 5'-deoxyadenosine + L-methionine + A + S-adenosyl-L-homocysteine + 2 H(+). Functionally, catalyzes the methylthiolation of an aspartic acid residue of ribosomal protein uS12. The chain is Ribosomal protein uS12 methylthiotransferase RimO from Prochlorococcus marinus (strain MIT 9301).